We begin with the raw amino-acid sequence, 391 residues long: MESETEPEPVTLLVKSPNQRHRDLELSGDRGWSVGHLKAHLSRVYPERPRPEDQRLIYSGKLLLDHQCLRDLLPKQEKRHVLHLVCNVKSPSKMPEINAKVAESTEEPAGSNRGQYPEDSSSDGLRQREVLRNLSSPGWENISRPEAAQQAFQGLGPGFSGYTPYGWLQLSWFQQIYARQYYMQYLAATAASGAFVPPPSAQEIPVVSAPAPAPIHNQFPAENQPANQNAAPQVVVNPGANQNLRMNAQGGPIVEEDDEINRDWLDWTYSAATFSVFLSILYFYSSLSRFLMVMGATVVMYLHHVGWFPFRPRPVQNFPNDGPPPDVVNQDPNNNLQEGTDPETEDPNHLPPDRDVLDGEQTSPSFMSTAWLVFKTFFASLLPEGPPAIAN.

Position 1 is an N-acetylmethionine (Met-1). At 1–263 (MESETEPEPV…VEEDDEINRD (263 aa)) the chain is on the cytoplasmic side. In terms of domain architecture, Ubiquitin-like spans 10 to 72 (VTLLVKSPNQ…LLDHQCLRDL (63 aa)). A disordered region spans residues 100-126 (KVAESTEEPAGSNRGQYPEDSSSDGLR). The segment covering 112 to 124 (NRGQYPEDSSSDG) has biased composition (polar residues). The interaction with UBQLN1 stretch occupies residues 115–200 (QYPEDSSSDG…ASGAFVPPPS (86 aa)). Ser-135 bears the Phosphoserine mark. An interaction with SYVN1 region spans residues 170–190 (LSWFQQIYARQYYMQYLAATA). The helical transmembrane segment at 264 to 284 (WLDWTYSAATFSVFLSILYFY) threads the bilayer. Topologically, residues 285–289 (SSLSR) are lumenal. The chain crosses the membrane as a helical span at residues 290–310 (FLMVMGATVVMYLHHVGWFPF). Residues 311–391 (RPRPVQNFPN…LPEGPPAIAN (81 aa)) lie on the Cytoplasmic side of the membrane. The interval 318–359 (FPNDGPPPDVVNQDPNNNLQEGTDPETEDPNHLPPDRDVLDG) is disordered. The segment covering 346 to 357 (DPNHLPPDRDVL) has biased composition (basic and acidic residues).

Interacts with PSEN1 and PSEN2. Interacts with UBXN6. Interacts with UBQLN1, UBQLN2 and UBQLN4. Component of the HRD1 complex, which comprises at least SYNV1/HRD1, FAM8A1, HERPUD1/HERP, OS9, SEL1L and UBE2J1. FAM8A1 binding to SYNV1 may promote recruitment of HERPUD1 to the HRD1 complex. In terms of tissue distribution, widely expressed; in the brain, expression seems to be restricted to neurons and vascular smooth muscle cells. Present in activated microglia in senile plaques in the brain of patients with Alzheimer disease.

The protein resides in the endoplasmic reticulum membrane. In terms of biological role, component of the endoplasmic reticulum quality control (ERQC) system also called ER-associated degradation (ERAD) involved in ubiquitin-dependent degradation of misfolded endoplasmic reticulum proteins. Could enhance presenilin-mediated amyloid-beta protein 40 generation. Binds to ubiquilins and this interaction is required for efficient degradation of CD3D via the ERAD pathway. In Homo sapiens (Human), this protein is Homocysteine-responsive endoplasmic reticulum-resident ubiquitin-like domain member 1 protein (HERPUD1).